A 226-amino-acid polypeptide reads, in one-letter code: Ribonuclease 3 (226 aa).

The 123-residue stretch at 7 to 129 (LPRLCRTLGY…IIGAVYLDAD (123 aa)) folds into the RNase III domain. A Mg(2+)-binding site is contributed by Glu-42. Residue Asp-46 is part of the active site. Mg(2+) contacts are provided by Asp-115 and Glu-118. Residue Glu-118 is part of the active site. Residues 156–226 (DPKTILQEYL…AAQVLELLNK (71 aa)) form the DRBM domain.

This sequence belongs to the ribonuclease III family. In terms of assembly, homodimer. Mg(2+) is required as a cofactor.

The protein localises to the cytoplasm. The catalysed reaction is Endonucleolytic cleavage to 5'-phosphomonoester.. In terms of biological role, digests double-stranded RNA. Involved in the processing of primary rRNA transcript to yield the immediate precursors to the large and small rRNAs (23S and 16S). Processes some mRNAs, and tRNAs when they are encoded in the rRNA operon. Processes pre-crRNA and tracrRNA of type II CRISPR loci if present in the organism. This is Ribonuclease 3 from Shewanella frigidimarina (strain NCIMB 400).